The following is a 1071-amino-acid chain: Nonribosomal peptide synthetase flvI (1071 aa).

The adenylation stretch occupies residues 33–417; sequence RRVLEQHDAP…GSLHFISRKD (385 aa). The Carrier domain occupies 552-628; that stretch reads MPLTEIELKM…MLCQNIKTDV (77 aa). Position 589 is an O-(pantetheine 4'-phosphoryl)serine (Ser-589). A condensation region spans residues 689–961; sequence NYTLRLEFKL…IDDRDIEQLS (273 aa).

Belongs to the NRP synthetase family.

It carries out the reaction (2S)-5,5-dimethylpiperidine-2-carboxylate + 10-hydroxy-pre-flavunoidine + ATP = flavunoidine + AMP + diphosphate + H(+). It participates in secondary metabolite biosynthesis; terpenoid biosynthesis. Functionally, nonribosomal peptide synthetase; part of the gene cluster that mediates the biosynthesis of flavunoidine, an alkaloidal terpenoid with a tetracyclic cage-like core connected to dimethylcadaverine via a C-N bond and acylated with 5,5-dimethyl-L-pipecolate. The tetracyclic core is synthesized by the terpene cyclase flvE and the cytochrome P450 monooxygenase flvD. The terpene cyclase flvE catalyzes the cyclization of farnesyl pyrophosphate (FPP) to form (1R,4R,5S)-(+)-acoradiene and the cytochrome P450 monooxygenase flvD is then responsible for oxidative conversion of (1R,4R,5S)-(+)-acoradiene into the tetracyclic cage present in the final product flavunoidine. In parallel, the N-methyltransferase flvH dimethylates L-lysine to give N,N-dimethyl-L-Lysin which is decarboxylated by flvG to afford dimethylcadaverine. The terpene cyclase-like protein flvF is the enzyme that attaches the dimethylcadaverine precusor at the C-7 of the tetracyclic cage to yield pre-flavunoidine. The cytochrome monooxygenase flvC hydroxylates the C-10 position of pre-flavunoidine whereas the NRPS flvI acylates the terpenoid core at the hydroxylated C-10 with dimethylpipecolate to yield final flavunoidine. The bifunctional enzyme flvA and the dehydrogenase flvB are responsible for the synthesis of the dimethylpipecolate precursor. The PLP-dependent lyase domain of flvA might use L-O-acetyl-homoserine and alpha-keto-isovalerate to form an intermediary ketone that can cyclize intramolecularly to yield an imine. The imine can be reduced by flvB to yield the 6-carboxylated pipecolate. The C-terminal alpha-KG-dependent oxygenase domain of flvA is then proposed to catalyze the decarboxylation to yield dimethylpipecolate. The protein is Nonribosomal peptide synthetase flvI of Aspergillus flavus (strain ATCC 200026 / FGSC A1120 / IAM 13836 / NRRL 3357 / JCM 12722 / SRRC 167).